Reading from the N-terminus, the 626-residue chain is Lipoprotein LpqB (626 aa).

The first 23 residues, 1-23 (MIGQANRIAAAVSTACLAVLLAG), serve as a signal peptide directing secretion. A lipid anchor (N-palmitoyl cysteine) is attached at Cys-24. Cys-24 is lipidated: S-diacylglycerol cysteine. The interval 428–457 (EAEREEDLADDTEPGDTAVGSTERRETDRG) is disordered. Positions 430–441 (EREEDLADDTEP) are enriched in acidic residues.

The protein belongs to the LpqB lipoprotein family.

The protein localises to the cell membrane. This Thermobifida fusca (strain YX) protein is Lipoprotein LpqB.